Here is a 182-residue protein sequence, read N- to C-terminus: MSRIGKRPITVPAKVQVTIDGTKVVVKGPKGELSRELPANVSVSQEGETLQVTRRDETRTSRQLHGLSRTLVANMVEGVSQGFQRRLEIQGVGYRAQVQGRNLVLNMGYSHQVQIEPPDGIQFVVENNTNVIVSGYDKEIVGNTAAKVRAVRPPEPYKGKGIRYAGEVVRRKAGKTGKGGKK.

The protein belongs to the universal ribosomal protein uL6 family. In terms of assembly, part of the 50S ribosomal subunit.

Functionally, this protein binds to the 23S rRNA, and is important in its secondary structure. It is located near the subunit interface in the base of the L7/L12 stalk, and near the tRNA binding site of the peptidyltransferase center. In Nostoc sp. (strain PCC 7120 / SAG 25.82 / UTEX 2576), this protein is Large ribosomal subunit protein uL6.